The primary structure comprises 240 residues: ATP-dependent dethiobiotin synthetase BioD (240 aa).

ATP is bound at residue 12-17 (EIGKTV). Thr-16 serves as a coordination point for Mg(2+). The active site involves Lys-37. Ser-41 serves as a coordination point for substrate. ATP-binding positions include Asp-54, 115-118 (EGSG), 179-180 (NQ), and 207-209 (PYI). Mg(2+) is bound by residues Asp-54 and Glu-115.

It belongs to the dethiobiotin synthetase family. Homodimer. The cofactor is Mg(2+).

The protein resides in the cytoplasm. The catalysed reaction is (7R,8S)-7,8-diammoniononanoate + CO2 + ATP = (4R,5S)-dethiobiotin + ADP + phosphate + 3 H(+). It functions in the pathway cofactor biosynthesis; biotin biosynthesis; biotin from 7,8-diaminononanoate: step 1/2. Functionally, catalyzes a mechanistically unusual reaction, the ATP-dependent insertion of CO2 between the N7 and N8 nitrogen atoms of 7,8-diaminopelargonic acid (DAPA, also called 7,8-diammoniononanoate) to form a ureido ring. The polypeptide is ATP-dependent dethiobiotin synthetase BioD (Clostridium acetobutylicum (strain ATCC 824 / DSM 792 / JCM 1419 / IAM 19013 / LMG 5710 / NBRC 13948 / NRRL B-527 / VKM B-1787 / 2291 / W)).